A 148-amino-acid chain; its full sequence is Large ribosomal subunit protein uL15B (148 aa).

2 stretches are compositionally biased toward basic residues: residues 1–13 (MPTH…KLRG) and 21–31 (RIGKHRKHPGG). The interval 1–38 (MPTHTSKTRKLRGHVSAGHGRIGKHRKHPGGRGKAGGL) is disordered. Y108 bears the Phosphotyrosine mark.

It belongs to the universal ribosomal protein uL15 family. In terms of assembly, component of the large ribosomal subunit (LSU). Mature yeast ribosomes consist of a small (40S) and a large (60S) subunit. The 40S small subunit contains 1 molecule of ribosomal RNA (18S rRNA) and at least 33 different proteins. The large 60S subunit contains 3 rRNA molecules (25S, 5.8S and 5S rRNA) and at least 46 different proteins.

It is found in the cytoplasm. Its subcellular location is the nucleus. The protein resides in the nucleolus. Functionally, component of the ribosome, a large ribonucleoprotein complex responsible for the synthesis of proteins in the cell. The small ribosomal subunit (SSU) binds messenger RNAs (mRNAs) and translates the encoded message by selecting cognate aminoacyl-transfer RNA (tRNA) molecules. The large subunit (LSU) contains the ribosomal catalytic site termed the peptidyl transferase center (PTC), which catalyzes the formation of peptide bonds, thereby polymerizing the amino acids delivered by tRNAs into a polypeptide chain. The nascent polypeptides leave the ribosome through a tunnel in the LSU and interact with protein factors that function in enzymatic processing, targeting, and the membrane insertion of nascent chains at the exit of the ribosomal tunnel. This chain is Large ribosomal subunit protein uL15B (rpl2801), found in Schizosaccharomyces pombe (strain 972 / ATCC 24843) (Fission yeast).